A 198-amino-acid chain; its full sequence is Large ribosomal subunit protein bL25 (198 aa).

Belongs to the bacterial ribosomal protein bL25 family. CTC subfamily. Part of the 50S ribosomal subunit; part of the 5S rRNA/L5/L18/L25 subcomplex. Contacts the 5S rRNA. Binds to the 5S rRNA independently of L5 and L18.

Functionally, this is one of the proteins that binds to the 5S RNA in the ribosome where it forms part of the central protuberance. This is Large ribosomal subunit protein bL25 from Phocaeicola vulgatus (strain ATCC 8482 / DSM 1447 / JCM 5826 / CCUG 4940 / NBRC 14291 / NCTC 11154) (Bacteroides vulgatus).